Consider the following 194-residue polypeptide: MRLCDTDIERYLDQGIISLTPRPSNEKINGATIDVRLGNSFRVFREHTAPFIDLSGPKEEVTAQLDAVMSDEIIIGENEAFFLHPGELALATTLEAVKLPANIIGWLDGRSSLARLGLMVHVTAHRIDPGWEGKIVLEFFNSGKLPLALRPNMVIGALSFEVLSGTAARPYTSRKDAKYKHQQSAVASRISEDK.

Residues 110–115, D128, 136–138, Y171, K178, and Q182 each bind dCTP; these read RSSLAR and VLE. Residue E138 is the Proton donor/acceptor of the active site.

It belongs to the dCTP deaminase family. Homotrimer.

It catalyses the reaction dCTP + H2O + H(+) = dUTP + NH4(+). It functions in the pathway pyrimidine metabolism; dUMP biosynthesis; dUMP from dCTP (dUTP route): step 1/2. Its function is as follows. Catalyzes the deamination of dCTP to dUTP. The sequence is that of dCTP deaminase from Histophilus somni (strain 2336) (Haemophilus somnus).